The sequence spans 145 residues: Basic phospholipase A2 Vb-2 (145 aa).

Positions 1-19 (MNPAHLLVLLAVCVSLLGA) are cleaved as a signal peptide. Positions 20–27 (ANIPPQPL) are excised as a propeptide. 7 disulfide bridges follow: Cys38–Cys97, Cys52–Cys144, Cys54–Cys70, Cys69–Cys125, Cys76–Cys118, Cys86–Cys111, and Cys104–Cys116. Positions 53, 55, and 57 each coordinate Ca(2+). The active site involves His73. Asp74 serves as a coordination point for Ca(2+). Asp119 is a catalytic residue.

Ca(2+) serves as cofactor. As to expression, expressed by the venom gland.

It localises to the secreted. The catalysed reaction is a 1,2-diacyl-sn-glycero-3-phosphocholine + H2O = a 1-acyl-sn-glycero-3-phosphocholine + a fatty acid + H(+). Functionally, snake venom phospholipase A2 (PLA2) that has only a weak enzymatic activity. Inhibits neuromuscular transmission by blocking acetylcholine release from the nerve termini. PLA2 catalyzes the calcium-dependent hydrolysis of the 2-acyl groups in 3-sn-phosphoglycerides. In Bungarus fasciatus (Banded krait), this protein is Basic phospholipase A2 Vb-2.